The sequence spans 186 residues: Elongation factor P (186 aa).

This sequence belongs to the elongation factor P family.

It is found in the cytoplasm. The protein operates within protein biosynthesis; polypeptide chain elongation. Its function is as follows. Involved in peptide bond synthesis. Stimulates efficient translation and peptide-bond synthesis on native or reconstituted 70S ribosomes in vitro. Probably functions indirectly by altering the affinity of the ribosome for aminoacyl-tRNA, thus increasing their reactivity as acceptors for peptidyl transferase. The chain is Elongation factor P from Shewanella piezotolerans (strain WP3 / JCM 13877).